The following is a 69-amino-acid chain: Putative membrane protein insertion efficiency factor (69 aa).

Belongs to the UPF0161 family.

It is found in the cell inner membrane. Functionally, could be involved in insertion of integral membrane proteins into the membrane. The protein is Putative membrane protein insertion efficiency factor of Aromatoleum aromaticum (strain DSM 19018 / LMG 30748 / EbN1) (Azoarcus sp. (strain EbN1)).